The sequence spans 512 residues: ATP synthase subunit alpha (512 aa).

169–176 (GDRQTGKT) is a binding site for ATP.

This sequence belongs to the ATPase alpha/beta chains family. In terms of assembly, F-type ATPases have 2 components, CF(1) - the catalytic core - and CF(0) - the membrane proton channel. CF(1) has five subunits: alpha(3), beta(3), gamma(1), delta(1), epsilon(1). CF(0) has four main subunits: a(1), b(1), b'(1) and c(9-12).

It localises to the cell inner membrane. It carries out the reaction ATP + H2O + 4 H(+)(in) = ADP + phosphate + 5 H(+)(out). Produces ATP from ADP in the presence of a proton gradient across the membrane. The alpha chain is a regulatory subunit. The protein is ATP synthase subunit alpha of Roseobacter denitrificans (strain ATCC 33942 / OCh 114) (Erythrobacter sp. (strain OCh 114)).